We begin with the raw amino-acid sequence, 164 residues long: Cyclic pyranopterin monophosphate synthase (164 aa).

Residues 75-77 and 116-117 each bind substrate; these read MCH and ME. Residue Asp131 is part of the active site.

This sequence belongs to the MoaC family. In terms of assembly, homohexamer; trimer of dimers.

It catalyses the reaction (8S)-3',8-cyclo-7,8-dihydroguanosine 5'-triphosphate = cyclic pyranopterin phosphate + diphosphate. The protein operates within cofactor biosynthesis; molybdopterin biosynthesis. Functionally, catalyzes the conversion of (8S)-3',8-cyclo-7,8-dihydroguanosine 5'-triphosphate to cyclic pyranopterin monophosphate (cPMP). This Staphylococcus aureus (strain MSSA476) protein is Cyclic pyranopterin monophosphate synthase.